Here is a 709-residue protein sequence, read N- to C-terminus: Polyribonucleotide nucleotidyltransferase (709 aa).

The Mg(2+) site is built by aspartate 485 and aspartate 491. In terms of domain architecture, KH spans 552–611; sequence PRIYTMKIDPKKIKDVIGKGGATIRSLTEETGTSIDIDDDGTVKIAAVDSNAAKNVMGRI. Residues 621–689 form the S1 motif domain; it reads GAIYKGKVTR…RQGRIRLTMK (69 aa).

It belongs to the polyribonucleotide nucleotidyltransferase family. In terms of assembly, component of the RNA degradosome, which is a multiprotein complex involved in RNA processing and mRNA degradation. Mg(2+) serves as cofactor.

It is found in the cytoplasm. The enzyme catalyses RNA(n+1) + phosphate = RNA(n) + a ribonucleoside 5'-diphosphate. Functionally, involved in mRNA degradation. Catalyzes the phosphorolysis of single-stranded polyribonucleotides processively in the 3'- to 5'-direction. The chain is Polyribonucleotide nucleotidyltransferase from Haemophilus influenzae (strain PittGG).